The sequence spans 123 residues: UPF0102 protein Maqu_2464 (123 aa).

Belongs to the UPF0102 family.

The sequence is that of UPF0102 protein Maqu_2464 from Marinobacter nauticus (strain ATCC 700491 / DSM 11845 / VT8) (Marinobacter aquaeolei).